Consider the following 338-residue polypeptide: tRNA-specific 2-thiouridylase MnmA (338 aa).

ATP contacts are provided by residues 6–13 (LMSGGIDS) and Met-32. Catalysis depends on Cys-87, which acts as the Nucleophile. A disulfide bridge connects residues Cys-87 and Cys-185. Gly-111 is a binding site for ATP. The segment at 135-137 (KDQ) is interaction with tRNA. Catalysis depends on Cys-185, which acts as the Cysteine persulfide intermediate. Positions 288–289 (RY) are interaction with tRNA.

This sequence belongs to the MnmA/TRMU family.

The protein resides in the cytoplasm. It catalyses the reaction S-sulfanyl-L-cysteinyl-[protein] + uridine(34) in tRNA + AH2 + ATP = 2-thiouridine(34) in tRNA + L-cysteinyl-[protein] + A + AMP + diphosphate + H(+). In terms of biological role, catalyzes the 2-thiolation of uridine at the wobble position (U34) of tRNA, leading to the formation of s(2)U34. The chain is tRNA-specific 2-thiouridylase MnmA from Syntrophomonas wolfei subsp. wolfei (strain DSM 2245B / Goettingen).